A 440-amino-acid polypeptide reads, in one-letter code: Histidinol dehydrogenase (440 aa).

NAD(+)-binding residues include Tyr-136, Gln-197, and Asn-220. Ser-243, Gln-265, and His-268 together coordinate substrate. Zn(2+) is bound by residues Gln-265 and His-268. Residues Glu-333 and His-334 each act as proton acceptor in the active site. Residues His-334, Asp-367, Glu-421, and His-426 each contribute to the substrate site. Asp-367 is a binding site for Zn(2+). Residue His-426 participates in Zn(2+) binding.

It belongs to the histidinol dehydrogenase family. Requires Zn(2+) as cofactor.

The enzyme catalyses L-histidinol + 2 NAD(+) + H2O = L-histidine + 2 NADH + 3 H(+). Its pathway is amino-acid biosynthesis; L-histidine biosynthesis; L-histidine from 5-phospho-alpha-D-ribose 1-diphosphate: step 9/9. Functionally, catalyzes the sequential NAD-dependent oxidations of L-histidinol to L-histidinaldehyde and then to L-histidine. This chain is Histidinol dehydrogenase, found in Pseudomonas aeruginosa (strain ATCC 15692 / DSM 22644 / CIP 104116 / JCM 14847 / LMG 12228 / 1C / PRS 101 / PAO1).